Here is a 471-residue protein sequence, read N- to C-terminus: Putative metabolite transport protein YncC (471 aa).

The next 12 helical transmembrane spans lie at 13–33 (LIMI…GVIN), 50–70 (VTEG…ALLC), 88–108 (FLFF…IMAV), 111–131 (FLLG…LAEM), 146–166 (LMIV…GVTM), 175–195 (YMLV…LKVP), 256–276 (LLWI…NSIM), 295–315 (IANI…IWLV), 323–343 (ILLI…IFSI), 358–378 (LTVL…WLVI), 393–413 (ISVF…PILL), and 416–436 (VGLS…IGFV).

Belongs to the major facilitator superfamily. Sugar transporter (TC 2.A.1.1) family.

Its subcellular location is the cell membrane. This chain is Putative metabolite transport protein YncC (yncC), found in Bacillus subtilis (strain 168).